Reading from the N-terminus, the 321-residue chain is Cysteine and histidine-rich domain-containing protein 1 (321 aa).

Residues C9, C14, C28, H31, C46, C47, C63, H68, C152, C157, C170, H173, C188, C189, C205, and H210 each contribute to the Zn(2+) site. 2 CHORD domains span residues 9 to 68 (CYHK…RGKH) and 152 to 210 (CRNN…SGEH). The CS domain occupies 218 to 308 (VSKFREDWFS…KHGTGWPRLK (91 aa)).

Its function is as follows. Regulates centrosome duplication. Controls the secretion of the tyrosine kinase receptor let-23/EGFR from the endoplasmic reticulum and is required for the localization of let-23/EGFR to the plasma membrane of vulval precursor cells. It thus plays a role in positively regulating let/EGFR signaling, and anchor cell and vulval precursor cell alignment. Plays a role in vulval development and morphogenesis. In Caenorhabditis elegans, this protein is Cysteine and histidine-rich domain-containing protein 1.